Consider the following 388-residue polypeptide: (S)-8-oxocitronellyl enol synthase ISY1 (388 aa).

NADP(+) contacts are provided by residues 35–37 (TGI), 63–64 (RR), 81–82 (DV), 105–106 (TW), and glutamine 143. Catalysis depends on residues lysine 147 and tyrosine 178. Residues tyrosine 178, isoleucine 205, and 212-214 (SMM) contribute to the NADP(+) site.

This sequence belongs to the short-chain dehydrogenases/reductases (SDR) family.

It catalyses the reaction (S)-8-oxocitronellyl enol + NADP(+) = (6E)-8-oxogeranial + NADPH + H(+). The catalysed reaction is (S)-8-oxocitronellyl enol + NAD(+) = (6E)-8-oxogeranial + NADH + H(+). Functionally, iridoid synthase that catalyzes the first step in generation of the iridoid ring scaffold using the linear monoterpene (6E)-8-oxogeranial as substrate. Iridoids comprise a large family of distinctive bicyclic monoterpenes that possess a wide range of pharmacological activities, including anticancer, anti-inflammatory, antifungal and antibacterial activities. Catalyzes the conversion of the linear monoterpene (6E)-8-oxogeranial to (S)-8-oxocitronellyl enol, a precursor of nepetalactones, which are metabolites that are both insect-repellent and have euphoric effect in cats. This Nepeta racemosa (Catmint) protein is (S)-8-oxocitronellyl enol synthase ISY1.